Here is a 422-residue protein sequence, read N- to C-terminus: MMMKLLFLIALFGCVVNSIRINNDNGLSFQSNCLGGSIQIAESIPLALNLQSNLSTHDAWMELITNAKKSIDMGIFYMTLTDGGQLDPVYGGQLGLDIYKALVDANSRGVSIRIVQNQPSSSMPDTDTQNLAKLGVQVRSINWPSLVGAGILHTKVIVVDQVSAYLGSANLDWRSLAQVKELGVLFQNCPSMVSDTEIAFQQYWDAAVVTELPSDWGVQYQAAYNQTNMASLLLNGNEKFEMFLAVSPPQFVSTDRTGDIDALVSAMNGATKTICISVMDYIPASLYNSPNTFWPVMDNALRAAAYNRGVQVRMLISHWNHTNYAIPQWLHSLDQVNNIDVRWFVVPDFPNEPQVPFTRVNHAKYMVTDEQSYVGTSNWSEDYYTNTGGLSYNIYNDEFTSQLQSIFDRDWNSPYSFPVTTY.

The N-terminal stretch at 1–18 is a signal peptide; sequence MMMKLLFLIALFGCVVNS. The N-linked (GlcNAc...) asparagine glycan is linked to Asn-53. In terms of domain architecture, PLD phosphodiesterase 1 spans 148–175; that stretch reads GAGILHTKVIVVDQVSAYLGSANLDWRS. Active-site residues include His-153, Lys-155, and Asp-160. 2 N-linked (GlcNAc...) asparagine glycosylation sites follow: Asn-225 and Asn-320. The PLD phosphodiesterase 2 domain occupies 357–383; the sequence is FTRVNHAKYMVTDEQSYVGTSNWSEDY. Catalysis depends on residues His-362, Lys-364, and Asp-369. N-linked (GlcNAc...) asparagine glycosylation is present at Asn-378.

The protein belongs to the phospholipase D family.

It catalyses the reaction a 1,2-diacyl-sn-glycero-3-phosphocholine + H2O = a 1,2-diacyl-sn-glycero-3-phosphate + choline + H(+). Inhibited by butan-1-ol. Its function is as follows. Hydrolyzes membrane phospholipids, such as PtdCho (phosphatidylcholine), producing the free headgroup and PtdOH (phosphatidic acid; signaling molecule on its own). This chain is Phospholipase D Z (pldZ), found in Dictyostelium discoideum (Social amoeba).